The primary structure comprises 748 residues: LPS-assembly protein LptD (748 aa).

The first 19 residues, 1-19 (MSKTWGILMLSVLSAPSLA), serve as a signal peptide directing secretion.

It belongs to the LptD family. In terms of assembly, component of the lipopolysaccharide transport and assembly complex. Interacts with LptE and LptA.

The protein resides in the cell outer membrane. Together with LptE, is involved in the assembly of lipopolysaccharide (LPS) at the surface of the outer membrane. The polypeptide is LPS-assembly protein LptD (Pseudoalteromonas translucida (strain TAC 125)).